The following is a 214-amino-acid chain: Ribosomal RNA large subunit methyltransferase E (214 aa).

5 residues coordinate S-adenosyl-L-methionine: G68, W70, D88, D104, and D129. Catalysis depends on K169, which acts as the Proton acceptor.

Belongs to the class I-like SAM-binding methyltransferase superfamily. RNA methyltransferase RlmE family.

It is found in the cytoplasm. It carries out the reaction uridine(2552) in 23S rRNA + S-adenosyl-L-methionine = 2'-O-methyluridine(2552) in 23S rRNA + S-adenosyl-L-homocysteine + H(+). Specifically methylates the uridine in position 2552 of 23S rRNA at the 2'-O position of the ribose in the fully assembled 50S ribosomal subunit. The protein is Ribosomal RNA large subunit methyltransferase E of Magnetococcus marinus (strain ATCC BAA-1437 / JCM 17883 / MC-1).